We begin with the raw amino-acid sequence, 272 residues long: Prohibitin 1 (272 aa).

Alanine 2 bears the N-acetylalanine mark. Position 91 is a phosphothreonine (threonine 91). An N6-acetyllysine mark is found at lysine 128 and lysine 186. Residues 177–211 adopt a coiled-coil conformation; the sequence is KEFTEAVEAKQVAQQEAERARFVVEKAEQQKKAAI. Lysine 202 bears the N6-acetyllysine; alternate mark. Position 202 is an N6-succinyllysine; alternate (lysine 202). Tyrosine 249 is modified (phosphotyrosine).

The protein belongs to the prohibitin family. In terms of assembly, the mitochondrial prohibitin complex consists of two subunits (PHB1 and PHB2), assembled into a membrane-associated ring-shaped supercomplex of approximately 1 mDa. Interacts with STOML2. Interacts with MAP1LC3B (membrane-bound form LC3-II); the interaction requires PHB2 and takes place upon Parkin-mediated mitochondrial damage. Interacts with STAT3 (unphosphorylated or phosphorylated at 'Ser-727'). Interacts with CLPB. Interacts with CD86 (via cytoplasmic domain); the interactions increases after priming with CD40.

The protein localises to the mitochondrion inner membrane. The protein resides in the nucleus. It is found in the cytoplasm. Its subcellular location is the cell membrane. Protein with pleiotropic attributes mediated in a cell-compartment- and tissue-specific manner, which include the plasma membrane-associated cell signaling functions, mitochondrial chaperone, and transcriptional co-regulator of transcription factors in the nucleus. Plays a role in adipose tissue and glucose homeostasis in a sex-specific manner. Contributes to pulmonary vascular remodeling by accelerating proliferation of pulmonary arterial smooth muscle cells. Its function is as follows. In the mitochondria, together with PHB2, forms large ring complexes (prohibitin complexes) in the inner mitochondrial membrane (IMM) and functions as a chaperone protein that stabilizes mitochondrial respiratory enzymes and maintains mitochondrial integrity in the IMM, which is required for mitochondrial morphogenesis, neuronal survival, and normal lifespan. The prohibitin complex, with DNAJC19, regulates cardiolipin remodeling and the protein turnover of OMA1 in a cardiolipin-binding manner. Regulates mitochondrial respiration activity playing a role in cellular aging. The prohibitin complex plays a role of mitophagy receptor involved in targeting mitochondria for autophagic degradation. Involved in mitochondrial-mediated antiviral innate immunity, activates RIG-I-mediated signal transduction and production of IFNB1 and proinflammatory cytokine IL6. In terms of biological role, in the nucleus, acts as a transcription coregulator, enhances promoter binding by TP53, a transcription factor it activates, but reduces the promoter binding by E2F1, a transcription factor it represses. Interacts with STAT3 to affect IL17 secretion in T-helper Th17 cells. Functionally, in the plasma membrane, cooperates with CD86 to mediate CD86-signaling in B lymphocytes that regulates the level of IgG1 produced through the activation of distal signaling intermediates. Upon CD40 engagement, required to activate NF-kappa-B signaling pathway via phospholipase C and protein kinase C activation. This is Prohibitin 1 (PHB1) from Bos taurus (Bovine).